A 142-amino-acid chain; its full sequence is Transcriptional regulator MraZ (142 aa).

SpoVT-AbrB domains follow at residues 5 to 51 (ASAL…PRPE) and 77 to 120 (AMDV…DAQT).

Belongs to the MraZ family. In terms of assembly, forms oligomers.

It localises to the cytoplasm. It is found in the nucleoid. This chain is Transcriptional regulator MraZ, found in Paraburkholderia phytofirmans (strain DSM 17436 / LMG 22146 / PsJN) (Burkholderia phytofirmans).